The following is a 390-amino-acid chain: Cystathionine beta-lyase MetC (390 aa).

Residue lysine 200 is modified to N6-(pyridoxal phosphate)lysine.

This sequence belongs to the trans-sulfuration enzymes family. In terms of assembly, homotetramer. It depends on pyridoxal 5'-phosphate as a cofactor.

The protein localises to the cytoplasm. It carries out the reaction L,L-cystathionine + H2O = L-homocysteine + pyruvate + NH4(+). The enzyme catalyses an S-substituted L-cysteine + H2O = a thiol + pyruvate + NH4(+). It functions in the pathway amino-acid biosynthesis; L-methionine biosynthesis via de novo pathway; L-homocysteine from L-cystathionine: step 1/1. Functionally, catalyzes the transformation of cystathionine into homocysteine. Also exhibits cysteine desulfhydrase activity in vitro, producing sulfide from cysteine. The polypeptide is Cystathionine beta-lyase MetC (metC) (Bacillus subtilis (strain 168)).